The sequence spans 305 residues: Oxygen-dependent coproporphyrinogen-III oxidase (305 aa).

Residue S92 participates in substrate binding. Positions 96 and 106 each coordinate a divalent metal cation. H106 functions as the Proton donor in the catalytic mechanism. 108–110 serves as a coordination point for substrate; sequence NVR. Positions 145 and 175 each coordinate a divalent metal cation. The interval 239 to 274 is important for dimerization; that stretch reads YVEFNLLFDRGTLFGLQSGGRAESILISLPPLVRWE. 257–259 contributes to the substrate binding site; it reads GGR.

The protein belongs to the aerobic coproporphyrinogen-III oxidase family. In terms of assembly, homodimer. A divalent metal cation serves as cofactor.

It localises to the cytoplasm. The enzyme catalyses coproporphyrinogen III + O2 + 2 H(+) = protoporphyrinogen IX + 2 CO2 + 2 H2O. It participates in porphyrin-containing compound metabolism; protoporphyrin-IX biosynthesis; protoporphyrinogen-IX from coproporphyrinogen-III (O2 route): step 1/1. Functionally, involved in the heme biosynthesis. Catalyzes the aerobic oxidative decarboxylation of propionate groups of rings A and B of coproporphyrinogen-III to yield the vinyl groups in protoporphyrinogen-IX. In Xylella fastidiosa (strain 9a5c), this protein is Oxygen-dependent coproporphyrinogen-III oxidase.